The sequence spans 190 residues: dTTP/UTP pyrophosphatase (190 aa).

Residue aspartate 68 is the Proton acceptor of the active site.

The protein belongs to the Maf family. YhdE subfamily. A divalent metal cation serves as cofactor.

The protein resides in the cytoplasm. It carries out the reaction dTTP + H2O = dTMP + diphosphate + H(+). The enzyme catalyses UTP + H2O = UMP + diphosphate + H(+). In terms of biological role, nucleoside triphosphate pyrophosphatase that hydrolyzes dTTP and UTP. May have a dual role in cell division arrest and in preventing the incorporation of modified nucleotides into cellular nucleic acids. In Acholeplasma laidlawii (strain PG-8A), this protein is dTTP/UTP pyrophosphatase.